We begin with the raw amino-acid sequence, 177 residues long: Large ribosomal subunit protein uL6 (177 aa).

The protein belongs to the universal ribosomal protein uL6 family. As to quaternary structure, part of the 50S ribosomal subunit.

Its function is as follows. This protein binds to the 23S rRNA, and is important in its secondary structure. It is located near the subunit interface in the base of the L7/L12 stalk, and near the tRNA binding site of the peptidyltransferase center. In Idiomarina loihiensis (strain ATCC BAA-735 / DSM 15497 / L2-TR), this protein is Large ribosomal subunit protein uL6.